The chain runs to 726 residues: Ribonuclease R (726 aa).

Positions 262–590 (RIDLRHLPFF…LVHRVIKNLL (329 aa)) constitute an RNB domain. Positions 642-723 (GDVLTGVISN…NERKIELSLY (82 aa)) constitute an S1 motif domain.

Belongs to the RNR ribonuclease family. RNase R subfamily. As to quaternary structure, monomer.

It localises to the cytoplasm. The catalysed reaction is Exonucleolytic cleavage in the 3'- to 5'-direction to yield nucleoside 5'-phosphates.. Functionally, 3'-5' exoribonuclease that releases 5'-nucleoside monophosphates and is involved in maturation of structured RNAs. The chain is Ribonuclease R from Buchnera aphidicola subsp. Schizaphis graminum (strain Sg).